Reading from the N-terminus, the 133-residue chain is Maturin (133 aa).

Belongs to the MTURN family.

It is found in the cytoplasm. Functionally, may be involved in early neuronal development. May play a role in promoting megakaryocyte differentiation. The chain is Maturin (mturn) from Danio rerio (Zebrafish).